A 723-amino-acid chain; its full sequence is Multiple organellar RNA editing factor 4, mitochondrial (723 aa).

A mitochondrion-targeting transit peptide spans 1-64 (MAMFSHRLRR…RLFSTTQYQY (64 aa)). Disordered regions lie at residues 180 to 303 (ITPG…GQTQ), 318 to 474 (RQEM…EGQP), and 663 to 723 (QNGG…NSRI). Basic and acidic residues predominate over residues 191 to 204 (EGFDSLKKESKPEQ). Polar residues-rich tracts occupy residues 219 to 233 (TSGQVQGQGSLTLPD), 273 to 303 (GQWQSRGQGNSFQGSFKQSQGTLPVRKGQTQ), 327 to 365 (GQAQRSQMPSSQGTLRQGQAQGSQRPSNQVGYNQGQGAQ), and 373 to 430 (QGAQ…NYSP). 2 stretches are compositionally biased toward low complexity: residues 459–474 (QGQGTPLPGQGQEGQP) and 682–695 (QGFSGQGQNQTFQQ). A compositionally biased stretch (basic and acidic residues) spans 714–723 (TETRKPNSRI).

Belongs to the MORF family. As to quaternary structure, heterodimers with MORF8/RIP1, MORF1/RIP8 and MORF3/RIP3.

It localises to the mitochondrion. Involved in organellar RNA editing. Required for the processing of few RNA editing site in mitochondria. The protein is Multiple organellar RNA editing factor 4, mitochondrial of Arabidopsis thaliana (Mouse-ear cress).